Consider the following 143-residue polypeptide: MAIERTFSIIKPDAVAKNHIGAIYNRFETAGLKIVASKMLHLTKEQAEGFYAEHSERGFFGALVAFMTSGPIMVQVLEGENAVLAHREILGATNPAQAAPGTIRADFAESIDENAAHGSDAVESAAREIAYFFSAEELCPRTR.

Positions 11, 59, 87, 93, 104, and 114 each coordinate ATP. Histidine 117 serves as the catalytic Pros-phosphohistidine intermediate.

The protein belongs to the NDK family. Homotetramer. Mg(2+) is required as a cofactor.

It localises to the cytoplasm. It carries out the reaction a 2'-deoxyribonucleoside 5'-diphosphate + ATP = a 2'-deoxyribonucleoside 5'-triphosphate + ADP. The catalysed reaction is a ribonucleoside 5'-diphosphate + ATP = a ribonucleoside 5'-triphosphate + ADP. In terms of biological role, major role in the synthesis of nucleoside triphosphates other than ATP. The ATP gamma phosphate is transferred to the NDP beta phosphate via a ping-pong mechanism, using a phosphorylated active-site intermediate. The sequence is that of Nucleoside diphosphate kinase from Shewanella baltica (strain OS223).